The primary structure comprises 214 residues: Large ribosomal subunit protein uL16-like (214 aa).

The protein belongs to the universal ribosomal protein uL16 family. Component of the 60S large ribosomal subunit (LSU).

It localises to the cytoplasm. Testis-specific component of the ribosome, which is required for the transition from prophase to metaphase in male meiosis I. Compensates for the inactivated X-linked RPL10 paralog during spermatogenesis. The ribosome is a large ribonucleoprotein complex responsible for the synthesis of proteins in the cell. The small ribosomal subunit (SSU) binds messenger RNAs (mRNAs) and translates the encoded message by selecting cognate aminoacyl-transfer RNA (tRNA) molecules. The large subunit (LSU) contains the ribosomal catalytic site termed the peptidyl transferase center (PTC), which catalyzes the formation of peptide bonds, thereby polymerizing the amino acids delivered by tRNAs into a polypeptide chain. The nascent polypeptides leave the ribosome through a tunnel in the LSU and interact with protein factors that function in enzymatic processing, targeting, and the membrane insertion of nascent chains at the exit of the ribosomal tunnel. This Macaca fascicularis (Crab-eating macaque) protein is Large ribosomal subunit protein uL16-like (RPL10L).